A 273-amino-acid chain; its full sequence is Cell division protein ZipA (273 aa).

M1 is a topological domain (periplasmic). Residues 2 to 22 (DIGLREWLIVIGIIVIAGILF) form a helical membrane-spanning segment. Topologically, residues 23 to 273 (DGWRRMRGGK…ERRQMTIKQR (251 aa)) are cytoplasmic. Residues 61–127 (VVNREHEPSL…DLQERPQKEQ (67 aa)) form a disordered region.

Belongs to the ZipA family. As to quaternary structure, interacts with FtsZ via their C-terminal domains.

The protein localises to the cell inner membrane. In terms of biological role, essential cell division protein that stabilizes the FtsZ protofilaments by cross-linking them and that serves as a cytoplasmic membrane anchor for the Z ring. Also required for the recruitment to the septal ring of downstream cell division proteins. The polypeptide is Cell division protein ZipA (Stutzerimonas stutzeri (strain A1501) (Pseudomonas stutzeri)).